The sequence spans 593 residues: Aspartate--tRNA ligase (593 aa).

Residue E180 participates in L-aspartate binding. Residues 204-207 (QIFK) are aspartate. R226 is an L-aspartate binding site. Residues 226-228 (RDE) and Q235 each bind ATP. H453 serves as a coordination point for L-aspartate. Residue E487 participates in ATP binding. L-aspartate is bound at residue R494. An ATP-binding site is contributed by 539-542 (GLDR).

The protein belongs to the class-II aminoacyl-tRNA synthetase family. Type 1 subfamily. Homodimer.

The protein resides in the cytoplasm. The enzyme catalyses tRNA(Asp) + L-aspartate + ATP = L-aspartyl-tRNA(Asp) + AMP + diphosphate. In terms of biological role, catalyzes the attachment of L-aspartate to tRNA(Asp) in a two-step reaction: L-aspartate is first activated by ATP to form Asp-AMP and then transferred to the acceptor end of tRNA(Asp). In Clostridium botulinum (strain Loch Maree / Type A3), this protein is Aspartate--tRNA ligase.